A 344-amino-acid polypeptide reads, in one-letter code: Aspartate carbamoyltransferase catalytic subunit (344 aa).

The segment at M1 to D30 is disordered. Residues R88 and T89 each coordinate carbamoyl phosphate. An L-aspartate-binding site is contributed by K116. Carbamoyl phosphate-binding residues include R138, H166, and Q169. Positions 199 and 253 each coordinate L-aspartate. Carbamoyl phosphate-binding residues include G294 and P295.

It belongs to the aspartate/ornithine carbamoyltransferase superfamily. ATCase family. Heterododecamer (2C3:3R2) of six catalytic PyrB chains organized as two trimers (C3), and six regulatory PyrI chains organized as three dimers (R2).

It catalyses the reaction carbamoyl phosphate + L-aspartate = N-carbamoyl-L-aspartate + phosphate + H(+). It functions in the pathway pyrimidine metabolism; UMP biosynthesis via de novo pathway; (S)-dihydroorotate from bicarbonate: step 2/3. Functionally, catalyzes the condensation of carbamoyl phosphate and aspartate to form carbamoyl aspartate and inorganic phosphate, the committed step in the de novo pyrimidine nucleotide biosynthesis pathway. The protein is Aspartate carbamoyltransferase catalytic subunit of Sphingopyxis alaskensis (strain DSM 13593 / LMG 18877 / RB2256) (Sphingomonas alaskensis).